The primary structure comprises 74 residues: NAD(P)H-quinone oxidoreductase subunit L (74 aa).

The next 2 membrane-spanning stretches (helical) occupy residues 5–25 and 43–63; these read LIIA…VPAA and AFMY…APLL.

This sequence belongs to the complex I NdhL subunit family. As to quaternary structure, NDH-1 can be composed of about 15 different subunits; different subcomplexes with different compositions have been identified which probably have different functions.

It is found in the cellular thylakoid membrane. The catalysed reaction is a plastoquinone + NADH + (n+1) H(+)(in) = a plastoquinol + NAD(+) + n H(+)(out). It catalyses the reaction a plastoquinone + NADPH + (n+1) H(+)(in) = a plastoquinol + NADP(+) + n H(+)(out). Functionally, NDH-1 shuttles electrons from an unknown electron donor, via FMN and iron-sulfur (Fe-S) centers, to quinones in the respiratory and/or the photosynthetic chain. The immediate electron acceptor for the enzyme in this species is believed to be plastoquinone. Couples the redox reaction to proton translocation, and thus conserves the redox energy in a proton gradient. Cyanobacterial NDH-1 also plays a role in inorganic carbon-concentration. The chain is NAD(P)H-quinone oxidoreductase subunit L from Synechococcus elongatus (strain ATCC 33912 / PCC 7942 / FACHB-805) (Anacystis nidulans R2).